We begin with the raw amino-acid sequence, 148 residues long: Antitoxin Xre (148 aa).

This sequence belongs to the MbcA/ParS/Xre antitoxin family. In terms of assembly, homodimer. Forms a complex with cognate toxin Rse.

Antitoxin component of a type II toxin-antitoxin (TA) system. Neutralizes the activity of cognate toxin Res. The chain is Antitoxin Xre from Yersinia enterocolitica serotype O:8 / biotype 1B (strain NCTC 13174 / 8081).